The sequence spans 426 residues: UDP-N-acetylglucosamine--N-acetylmuramyl-(pentapeptide) pyrophosphoryl-undecaprenol N-acetylglucosamine transferase (426 aa).

UDP-N-acetyl-alpha-D-glucosamine is bound by residues 28–30 (TGG), asparagine 140, arginine 176, serine 204, isoleucine 257, and glutamine 302. The disordered stretch occupies residues 369–388 (AGNGPSGMGNGHSSEQPQER).

It belongs to the glycosyltransferase 28 family. MurG subfamily.

It localises to the cell inner membrane. The enzyme catalyses di-trans,octa-cis-undecaprenyl diphospho-N-acetyl-alpha-D-muramoyl-L-alanyl-D-glutamyl-meso-2,6-diaminopimeloyl-D-alanyl-D-alanine + UDP-N-acetyl-alpha-D-glucosamine = di-trans,octa-cis-undecaprenyl diphospho-[N-acetyl-alpha-D-glucosaminyl-(1-&gt;4)]-N-acetyl-alpha-D-muramoyl-L-alanyl-D-glutamyl-meso-2,6-diaminopimeloyl-D-alanyl-D-alanine + UDP + H(+). It participates in cell wall biogenesis; peptidoglycan biosynthesis. Cell wall formation. Catalyzes the transfer of a GlcNAc subunit on undecaprenyl-pyrophosphoryl-MurNAc-pentapeptide (lipid intermediate I) to form undecaprenyl-pyrophosphoryl-MurNAc-(pentapeptide)GlcNAc (lipid intermediate II). The polypeptide is UDP-N-acetylglucosamine--N-acetylmuramyl-(pentapeptide) pyrophosphoryl-undecaprenol N-acetylglucosamine transferase (Xanthomonas axonopodis pv. citri (strain 306)).